Consider the following 114-residue polypeptide: Small ribosomal subunit protein uS14m (114 aa).

This sequence belongs to the universal ribosomal protein uS14 family.

The protein localises to the mitochondrion. In Eremothecium gossypii (strain ATCC 10895 / CBS 109.51 / FGSC 9923 / NRRL Y-1056) (Yeast), this protein is Small ribosomal subunit protein uS14m (MRP2).